Consider the following 481-residue polypeptide: MASAASVTSLADEVNCPICQGTLREPVTIDCGHNFCRACLTRYCEIPGPDLEESPTCPLCKEPFRPGSFRPNWQLANVVENIERLQLVSTLGLGEEDVCQEHGEKIYFFCEDDEMQLCVVCREAGEHATHTMRFLEDAAAPYREQIHKCLKCLRKEREEIQEIQSRENKRMQVLLTQVSTKRQQVISEFAHLRKFLEEQQSILLAQLESQDGDILRQRDEFDLLVAGEICRFSALIEELEEKNERPARELLTDIRSTLIRCETRKCRKPVAVSPELGQRIRDFPQQALPLQREMKMFLEKLCFELDYEPAHISLDPQTSHPKLLLSEDHQRAQFSYKWQNSPDNPQRFDRATCVLAHTGITGGRHTWVVSIDLAHGGSCTVGVVSEDVQRKGELRLRPEEGVWAVRLAWGFVSALGSFPTRLTLKEQPRQVRVSLDYEVGWVTFTNAVTREPIYTFTASFTRKVIPFFGLWGRGSSFSLSS.

The RING-type zinc-finger motif lies at 16–61 (CPICQGTLREPVTIDCGHNFCRACLTRYCEIPGPDLEESPTCPLCK). The B box-type zinc-finger motif lies at 94-135 (GEEDVCQEHGEKIYFFCEDDEMQLCVVCREAGEHATHTMRFL). Zn(2+) contacts are provided by Cys-99, His-102, Cys-121, and His-127. Residues 150 to 177 (LKCLRKEREEIQEIQSRENKRMQVLLTQ) are a coiled coil. The 190-residue stretch at 292–481 (REMKMFLEKL…GRGSSFSLSS (190 aa)) folds into the B30.2/SPRY domain.

The protein belongs to the TRIM/RBCC family. Interacts with IFNAR1; this interaction prevents association of IFNAR1 with TYK2.

It localises to the cytoplasm. Functionally, E3 ligase that plays an essential role in the differentiation and survival of terminal erythroid cells. May directly bind to PTEN and promote its ubiquitination, resulting in its proteasomal degradation and activation of hypertrophic signaling. In addition, plays a role in immune response regulation by repressing the phosphorylation of STAT1 and STAT2 in the interferon/JAK/STAT signaling pathway independent of its E3 ligase activity. Mechanistically, interacts with the intracellular domain of IFNAR1 and thereby inhibits the association between TYK2 and IFNAR1. The sequence is that of Tripartite motif-containing protein 10 (TRIM10) from Homo sapiens (Human).